Reading from the N-terminus, the 264-residue chain is MKQYLELLNRVLTEGVRKEDRTGTGTISVFGHQMRFNLEEGFPLLTTKKLHLKSIIYELLWFLNGDTNVKYLQDHGVRIWNEWADADGSLGHIYGYQWRSWPDYKGGSIDQITEAVETIKHNPDSRRIIVSAWNVADLDNMNLPPCHAFFQFYVANGRLSLQLYQRSADIFLGVPFNIASYALLLQMMAQATGLKAGDFVHTLGDAHIYSNHLEQVKLQLTREPRALPRMEINPDVKSIFDFKFEDFNLTGYDPHPHIKGEVAV.

DUMP is bound at residue R21. H51 lines the (6R)-5,10-methylene-5,6,7,8-tetrahydrofolate pocket. 126–127 (RR) serves as a coordination point for dUMP. Catalysis depends on C146, which acts as the Nucleophile. DUMP contacts are provided by residues 166–169 (RSAD), N177, and 207–209 (HIY). Residue D169 coordinates (6R)-5,10-methylene-5,6,7,8-tetrahydrofolate. Residue A263 participates in (6R)-5,10-methylene-5,6,7,8-tetrahydrofolate binding.

The protein belongs to the thymidylate synthase family. Bacterial-type ThyA subfamily. As to quaternary structure, homodimer.

Its subcellular location is the cytoplasm. The enzyme catalyses dUMP + (6R)-5,10-methylene-5,6,7,8-tetrahydrofolate = 7,8-dihydrofolate + dTMP. The protein operates within pyrimidine metabolism; dTTP biosynthesis. In terms of biological role, catalyzes the reductive methylation of 2'-deoxyuridine-5'-monophosphate (dUMP) to 2'-deoxythymidine-5'-monophosphate (dTMP) while utilizing 5,10-methylenetetrahydrofolate (mTHF) as the methyl donor and reductant in the reaction, yielding dihydrofolate (DHF) as a by-product. This enzymatic reaction provides an intracellular de novo source of dTMP, an essential precursor for DNA biosynthesis. This chain is Thymidylate synthase, found in Parabacteroides distasonis (strain ATCC 8503 / DSM 20701 / CIP 104284 / JCM 5825 / NCTC 11152).